A 259-amino-acid polypeptide reads, in one-letter code: Probable ABC transporter arginine-binding protein ArtJ (259 aa).

Positions Met1 to Ser25 are cleaved as a signal peptide. Asn38, Glu45, Ala96, Gly97, Ser99, Arg104, and Phe149 together coordinate L-arginine.

The protein belongs to the bacterial solute-binding protein 3 family.

Its subcellular location is the secreted. The protein resides in the cell surface. Its function is as follows. Probably part of an ABC transporter complex involved in arginine transport. Binds arginine. Interacts with host epithelial cells, suggesting a role in host-cell adhesion during infection. The sequence is that of Probable ABC transporter arginine-binding protein ArtJ from Chlamydia pneumoniae (Chlamydophila pneumoniae).